Here is a 329-residue protein sequence, read N- to C-terminus: uncharacterized protein (329 aa).

Transmembrane regions (helical) follow at residues 13–35 (IPVL…WATI) and 229–248 (VIPA…SVVY).

It localises to the cell membrane. This is an uncharacterized protein from Archaeoglobus fulgidus (strain ATCC 49558 / DSM 4304 / JCM 9628 / NBRC 100126 / VC-16).